Reading from the N-terminus, the 259-residue chain is Putative zinc metalloprotease Rip2 (259 aa).

2 consecutive transmembrane segments (helical) span residues 14–34 (PIFL…WIAA) and 39–59 (PLSY…SLCL). Residue H60 participates in Zn(2+) binding. E61 is an active-site residue. H64 contacts Zn(2+). Transmembrane regions (helical) follow at residues 96 to 116 (LGLP…GAVY), 129 to 149 (IVSL…LGLT), 159 to 179 (VFWS…VLNL), and 203 to 223 (LAPA…TPAL).

This sequence belongs to the peptidase M50B family. Zn(2+) serves as cofactor.

The protein resides in the cell membrane. In Mycolicibacterium smegmatis (strain ATCC 700084 / mc(2)155) (Mycobacterium smegmatis), this protein is Putative zinc metalloprotease Rip2 (rip2).